Consider the following 1479-residue polypeptide: ESX secretion system protein EccC (1479 aa).

The Cytoplasmic segment spans residues 1–235 (MSQLWVLYET…SQEGDGDPRG (235 aa)). The chain crosses the membrane as a helical span at residues 236–256 (LWLMVLPPVMMLLVIGAVALI). Over 257–259 (QPR) the chain is Extracellular. Residues 260-280 (GVFIMISIAMFATTIVTSTAQ) traverse the membrane as a helical segment. The Cytoplasmic portion of the chain corresponds to 281–1479 (YMREKKARQM…DQKIQIPKVE (1199 aa)). The stretch at 291 to 321 (RKEKRRRIYTNYLEQKREELQALSEKQRNVL) forms a coiled coil. FtsK domains are found at residues 652–848 (NDVV…NDSK) and 984–1168 (QSDY…SEKF). Position 672–679 (672–679 (GTTGSGKS)) interacts with ATP. E785 is an active-site residue. ATP-binding positions include 1004 to 1009 (GYGKST), N1036, D1105, I1197, D1206, 1287 to 1291 (RKGKT), and I1475. The FtsK 3 domain maps to 1267-1444 (VRPVAINMRT…ILVTKKSEQS (178 aa)).

In terms of assembly, whole protein oligomerizes in native gels. Part of the ESX / type VII secretion system (T7SS), which is composed of cytosolic and membrane components. The ESX membrane complex is composed of EccB, EccC and EccD.

The protein resides in the cell membrane. EsxB binding to the third FtsK domain causes multimerization; a subsequent unknown step relieves the allosteric inhibition of linker 2 on FtsK domain 1, activating the ATPase activity. Functionally, part of the ESX specialized secretion system, which exports proteins from the cell including EsxA (ESAT-6) and EsxB (CFP-10). Might be the translocase subunit. Probably only the first FtsK domain can hydrolyze ATP. The chain is ESX secretion system protein EccC from Geobacillus thermodenitrificans (strain NG80-2).